The following is a 260-amino-acid chain: Potassium inward rectifier (Kir)-like channel 3 (260 aa).

Residues 1 to 34 (MPMTPSEFKNRLLFGSLPRSSSDPTDLQFTEPNV) form a disordered region. At 1 to 68 (MPMTPSEFKN…EQSVSKSIAR (68 aa)) the chain is on the cytoplasmic side. Over residues 18-31 (PRSSSDPTDLQFTE) the composition is skewed to polar residues. A helical membrane pass occupies residues 69 to 89 (QALALLVVYLSLGVLIYWLTL). The segment at residues 127-146 (DSFCFSVMMVTTVGFGDRAF) is an intramembrane region (pore-forming). Residues 153–173 (FLAAVWLLVSTLAVARAFLFL) form a helical membrane-spanning segment. The Cytoplasmic segment spans residues 174-260 (ADARADKRNR…LVDLTTATSV (87 aa)). EF-hand domains are found at residues 190–225 (LGES…QMEK) and 229–256 (EDFI…DLTT). Positions 203, 205, 207, 209, 214, 242, 246, 248, and 253 each coordinate Ca(2+).

It belongs to the two pore domain potassium channel (TC 1.A.1.7) family. In terms of assembly, homotetramer. Expressed in hydathodes and the vascular tissues of roots, stems, leaves and flowers.

It localises to the vacuole membrane. In terms of biological role, probable calcium-activated potassium channel. The sequence is that of Potassium inward rectifier (Kir)-like channel 3 (KCO3) from Arabidopsis thaliana (Mouse-ear cress).